A 711-amino-acid polypeptide reads, in one-letter code: Transferrin-binding protein B (711 aa).

The N-terminal stretch at M1–A20 is a signal peptide. C21 carries N-palmitoyl cysteine lipidation. The S-diacylglycerol cysteine moiety is linked to residue C21. Disordered regions lie at residues V33–Q58, S79–K105, D118–A146, S225–L251, L370–S396, P437–N492, and T682–Q711. Residues D46 to K56 are compositionally biased toward polar residues. A compositionally biased stretch (basic and acidic residues) spans K96 to K105. Over residues I119–A146 the composition is skewed to polar residues. Positions G373–S393 are enriched in low complexity. Residues F457–A472 show a composition bias toward basic and acidic residues. Composition is skewed to polar residues over residues A474–N492 and K684–T699.

The protein belongs to the TbpB family. Isotype II subfamily. In terms of assembly, binds only human holo-transferrin (TF), via the TF C-terminus. Forms a large complex with TbpA and TF. Interacts via its C-terminal domain with Slam1.

The protein localises to the cell outer membrane. Its subcellular location is the cell surface. In terms of biological role, neisseria acquires iron by extracting it from serum transferrin (TF) in its human host. Acts as a TF receptor and is required for TF utilization. Involved in the initial capture of TF. Helps select only those TF molecules that can be used as an iron source and concentrates them on the cell surface, maintaining the iron-loaded status of the TF C-terminal lobe until its delivery to TbpA. The chain is Transferrin-binding protein B (tbpB) from Neisseria meningitidis serogroup B.